The chain runs to 428 residues: Flotillin-2 (428 aa).

3 S-palmitoyl cysteine lipidation sites follow: cysteine 4, cysteine 19, and cysteine 20.

This sequence belongs to the band 7/mec-2 family. Flotillin subfamily. As to quaternary structure, heterooligomeric complex of flotillins 1 and 2. Post-translationally, palmitoylation may be required for the formation of higher order complexes and for neurite outgrowth in cultured neural stem cells. Normally expressed in growing retinal exons of newly differentiated ganglion cells at the retinal margin. After optic nerve injury, expressed in all retinal ganglion cells and retinal axons. Also expressed in endothelial cells, spinal cord, larval and adult skin, muscle processes, thymus and gill macrophages.

The protein localises to the membrane. It is found in the endosome. Its function is as follows. May play a role in axon growth and regeneration. May be involved in epidermal cell adhesion and epidermal structure and function. This Carassius auratus (Goldfish) protein is Flotillin-2 (flot2).